The primary structure comprises 114 residues: Cytochrome c2 (114 aa).

Pyrrolidone carboxylic acid is present on glutamine 1. 4 residues coordinate heme c: cysteine 13, cysteine 16, histidine 17, and methionine 93.

It belongs to the cytochrome c family. Binds 1 heme c group covalently per subunit.

It localises to the periplasm. Cytochrome c2 is found mainly in purple, non-sulfur, photosynthetic bacteria where it functions as the electron donor to the oxidized bacteriochlorophyll in the photophosphorylation pathway. However, it may also have a role in the respiratory chain and is found in some non-photosynthetic bacteria. The protein is Cytochrome c2 of Rhodopseudomonas palustris.